Here is a 289-residue protein sequence, read N- to C-terminus: Phosphoribulokinase (289 aa).

12-20 (GSSGAGTTT) serves as a coordination point for ATP.

This sequence belongs to the phosphoribulokinase family.

The enzyme catalyses D-ribulose 5-phosphate + ATP = D-ribulose 1,5-bisphosphate + ADP + H(+). Its pathway is carbohydrate biosynthesis; Calvin cycle. The sequence is that of Phosphoribulokinase (cbbP) from Rhizobium meliloti (strain 1021) (Ensifer meliloti).